Consider the following 352-residue polypeptide: MAPSTRSPVMHETDEEDWFAEDDAAAPAAAPPTEFDHIARLLRPLTRGDPVALDLLDDAAVLPSRPGYDLVITKDAMVAGVHFLAEEALDVVARKLLRTNLSDLAAKAAEPYGYFLAVGWPSGSDVASRETFARGLAEDGALFDISLLGGDTVTTSGPLVVSATFLGWAPQGETILRRGAKPGDRLMVSGTIGDGWLGLLAQWGEVMDADGAMLRRYRQPEPRVTLRDAMRVHAKAAADVSDGLLADSSHIAKASGCRVRVDLERLPLSPGAQAWLDQQPEQVEGRISLASGGDDYEIVCAVDPNEAWAFRVAAAAAGVKVSEIGEFVEGEGVSAYYKGRDVTPSRLGWLHG.

Residues Asp58, Thr73, and Asp75 each contribute to the Mg(2+) site. His82 is a binding site for substrate. Residues Asp103 and Asp151 each coordinate Mg(2+). Residues 150–151 (GD) and Arg177 each bind ATP. Asp239 is a Mg(2+) binding site. Ser241 provides a ligand contact to ATP. Residue Asp242 participates in Mg(2+) binding. Residues Asp294 and Trp349 each coordinate substrate.

The protein belongs to the thiamine-monophosphate kinase family.

The enzyme catalyses thiamine phosphate + ATP = thiamine diphosphate + ADP. It participates in cofactor biosynthesis; thiamine diphosphate biosynthesis; thiamine diphosphate from thiamine phosphate: step 1/1. In terms of biological role, catalyzes the ATP-dependent phosphorylation of thiamine-monophosphate (TMP) to form thiamine-pyrophosphate (TPP), the active form of vitamin B1. The protein is Thiamine-monophosphate kinase of Caulobacter vibrioides (strain ATCC 19089 / CIP 103742 / CB 15) (Caulobacter crescentus).